Reading from the N-terminus, the 192-residue chain is Glycerol-3-phosphate acyltransferase (192 aa).

5 consecutive transmembrane segments (helical) span residues 4 to 24 (MFWLLTTFAYLLGSLSFAILL), 54 to 74 (LAILTLLGDLCKGLVPILIAS), 80 to 100 (IAQQGWIGVCAVLGHLFPVYF), 112 to 132 (AGVLLGLYPPAAALAIVAWLL), and 154 to 174 (LLAWQEPHALLPMSVLTLLIV).

It belongs to the PlsY family. In terms of assembly, probably interacts with PlsX.

The protein resides in the cell inner membrane. It catalyses the reaction an acyl phosphate + sn-glycerol 3-phosphate = a 1-acyl-sn-glycero-3-phosphate + phosphate. It functions in the pathway lipid metabolism; phospholipid metabolism. Its function is as follows. Catalyzes the transfer of an acyl group from acyl-phosphate (acyl-PO(4)) to glycerol-3-phosphate (G3P) to form lysophosphatidic acid (LPA). This enzyme utilizes acyl-phosphate as fatty acyl donor, but not acyl-CoA or acyl-ACP. This is Glycerol-3-phosphate acyltransferase from Pseudomonas syringae pv. syringae (strain B728a).